The following is a 310-amino-acid chain: Ribosomal protein L11 methyltransferase (310 aa).

S-adenosyl-L-methionine is bound by residues Thr156, Gly179, Asp201, and Asn246.

It belongs to the methyltransferase superfamily. PrmA family.

The protein localises to the cytoplasm. It carries out the reaction L-lysyl-[protein] + 3 S-adenosyl-L-methionine = N(6),N(6),N(6)-trimethyl-L-lysyl-[protein] + 3 S-adenosyl-L-homocysteine + 3 H(+). Functionally, methylates ribosomal protein L11. The sequence is that of Ribosomal protein L11 methyltransferase from Desulfatibacillum aliphaticivorans.